Here is a 570-residue protein sequence, read N- to C-terminus: CDKN2A-interacting protein (570 aa).

N-acetylalanine is present on A2. The XRN2-binding (XTBD) domain occupies V19–S126. The interval G122–S345 is disordered. S124 is subject to Phosphoserine. Residues V147–A162 are compositionally biased toward basic and acidic residues. A compositionally biased stretch (low complexity) spans S167–S183. A Glycyl lysine isopeptide (Lys-Gly) (interchain with G-Cter in SUMO1) cross-link involves residue K176. A compositionally biased stretch (polar residues) spans A184–S198. Residues S203 to G221 are compositionally biased toward low complexity. Residues S224–G233 are compositionally biased toward basic and acidic residues. S234 carries the post-translational modification Phosphoserine. 2 stretches are compositionally biased toward low complexity: residues S234 to S248 and S271 to S301. Residues C302–A317 are compositionally biased toward polar residues. Low complexity predominate over residues S318 to S345. S378 carries the post-translational modification Phosphoserine. The disordered stretch occupies residues S383–S407. The DRBM domain maps to N452–K527.

The protein belongs to the CARF family. In terms of assembly, interacts with CDKN2A/p14ARF, p53/TP53 and MDM2. Interacts with CHEK2 and MAPK3. Interacts with XRN2. Post-translationally, may be ubiquitinated.

The protein localises to the nucleus. It is found in the nucleoplasm. Functionally, regulates DNA damage response and cell proliferation in a dose-dependent manner through a number of signaling pathways involved in cell proliferation, apoptosis and senescence. This is CDKN2A-interacting protein (Cdkn2aip) from Rattus norvegicus (Rat).